The following is a 399-amino-acid chain: Ectoine hydrolase (399 aa).

This sequence belongs to the peptidase M24 family.

The protein localises to the cytoplasm. It catalyses the reaction L-ectoine + H2O = (2S)-2-acetamido-4-aminobutanoate. In terms of biological role, involved in the degradation of ectoine, which allows H.elongata to utilize ectoine as both a carbon and a nitrogen source for growth. Catalyzes the hydrolysis of ectoine to N-acetyl-L-2,4-diaminobutyric acid (N-Ac-DABA). It can produce both isoforms N-gamma-acetyl-L-2,4-diaminobutyric acid (N-gamma-Ac-DABA) and N-alpha-acetyl-L-2,4-diaminobutyric acid (-Nalpha-Ac-DABA), however N-alpha-Ac-DABA is the essential substrate for the subsequent catabolic enzyme DoeB. The chain is Ectoine hydrolase from Halomonas elongata (strain ATCC 33173 / DSM 2581 / NBRC 15536 / NCIMB 2198 / 1H9).